Consider the following 195-residue polypeptide: Imidazoleglycerol-phosphate dehydratase (195 aa).

It belongs to the imidazoleglycerol-phosphate dehydratase family.

It is found in the cytoplasm. The enzyme catalyses D-erythro-1-(imidazol-4-yl)glycerol 3-phosphate = 3-(imidazol-4-yl)-2-oxopropyl phosphate + H2O. Its pathway is amino-acid biosynthesis; L-histidine biosynthesis; L-histidine from 5-phospho-alpha-D-ribose 1-diphosphate: step 6/9. The polypeptide is Imidazoleglycerol-phosphate dehydratase (Clostridium botulinum (strain Alaska E43 / Type E3)).